The sequence spans 240 residues: Probable transcriptional regulatory protein BLi02909/BL01150 (240 aa).

Residues 1–14 (MAGHSKWKNIQRRK) show a composition bias toward basic residues. Residues 1–21 (MAGHSKWKNIQRRKNAQDAKR) form a disordered region.

It belongs to the TACO1 family.

It is found in the cytoplasm. The polypeptide is Probable transcriptional regulatory protein BLi02909/BL01150 (Bacillus licheniformis (strain ATCC 14580 / DSM 13 / JCM 2505 / CCUG 7422 / NBRC 12200 / NCIMB 9375 / NCTC 10341 / NRRL NRS-1264 / Gibson 46)).